A 2187-amino-acid polypeptide reads, in one-letter code: Non-reducing polyketide synthase phnA (2187 aa).

Residues 17–255 are N-terminal acylcarrier protein transacylase domain (SAT); sequence LLFGDLSLAH…KYLDIDSPYH (239 aa). Positions 383–819 constitute a Ketosynthase family 3 (KS3) domain; that stretch reads HSKIAIVGYS…GGNTAMLIED (437 aa). Residues Cys-555, His-690, and His-735 each act as for beta-ketoacyl synthase activity in the active site. Positions 926-1226 are malonyl-CoA:ACP transacylase (MAT) domain; it reads RVAFAFTGQG…GMVKGTIDSR (301 aa). The active-site For acyl/malonyl transferase activity is Ser-1021. The tract at residues 1321 to 1637 is product template (PT) domain; sequence PCAQQIVEEF…PRRALDHLLP (317 aa). The N-terminal hotdog fold stretch occupies residues 1324-1458; it reads QQIVEEFHDS…LDVVLYPGQQ (135 aa). One can recognise a PKS/mFAS DH domain in the interval 1324-1633; that stretch reads QQIVEEFHDS…FQGVPRRALD (310 aa). Catalysis depends on His-1356, which acts as the Proton acceptor; for dehydratase activity. The tract at residues 1486–1633 is C-terminal hotdog fold; the sequence is TETHLIKRGM…FQGVPRRALD (148 aa). The Proton donor; for dehydratase activity role is filled by Asp-1546. Low complexity predominate over residues 1652–1669; sequence KAPVAAVAPPRTPTKAAP. The interval 1652 to 1681 is disordered; that stretch reads KAPVAAVAPPRTPTKAAPQSRQAAPKQKRS. Carrier domains lie at 1684–1758 and 1796–1874; these read SDVF…SNSD and SSES…YNVM. The residue at position 1718 (Ser-1718) is an O-(pantetheine 4'-phosphoryl)serine. The tract at residues 1754–1796 is disordered; sequence LSNSDEDDTPSGDSSTYEDSESQITSPASSVGPETPGGGEFGS. The span at 1757 to 1774 shows a compositional bias: acidic residues; that stretch reads SDEDDTPSGDSSTYEDSE. O-(pantetheine 4'-phosphoryl)serine is present on Ser-1834. Positions 1906 to 2183 are thioesterase (TE) domain; the sequence is SSLPQATSIL…PEMGEAVAEF (278 aa). The active-site For thioesterase activity is Ser-2009.

The catalysed reaction is 6 malonyl-CoA + acetyl-CoA + 5 H(+) = 3,6,7,9-tetrahydroxy-3-methyl-2,3-dihydro-1H-naphtho[2,1-b]pyran-1-one + 6 CO2 + 7 CoA + H2O. Its pathway is secondary metabolite biosynthesis. Its function is as follows. Non-reducing polyketide synthase; part of the gene cluster that mediates the biosynthesis of phenalenones such as herqueinone, compounds that have been reported to treat tumors, bacterial infections and/or mycoses, and rheumatic diseases. The non-reducing polyketide synthase phnA synthesizes the heptaketide backbone and cyclizes it into the angular, hemiketal-containing naphtho-gamma-pyrone prephenalenone. The product template (PT) domain of phnA catalyzes only the C4-C9 aldol condensation, which is unprecedented among known PT domains. The transformation of prephenalenone to phenalenones requires an FAD-dependent monooxygenase phnB, which catalyzes the C2 aromatic hydroxylation of prephenalenone and ring opening of the gamma-pyrone ring simultaneously. Subsequent intramolecular deprotonation of C3 phenolic oxygen accelerates phenalenone ring closure to yield the tricyclic phenalenone core with a C2 hydroxylation. The prenyltransferase phnF further catalyzes reverse C-prenylation of phenalenone by direct electrophilic substitution at C6, or possibly via first a forward O-prenylation of a neighboring phenol in phenalenone, followed by a Claisen rearrangement. The hydroalkoxylation enzyme phnH catalyzes the 5-exo-trig cyclization via acid catalysis after the spontaneous deprotonation of 7-OH, which leads to the formation of the dihydrobenzofuran atrovenetin. Atrovenetin is further converted to deoxyherqueinone by the O-methyltransferase phnC which can methylate C2-OH to stabilize the northern portion of the phenalenone core. Finally, the oxidoreductase phnG converts deoxyherqueinone to herqueinone via C6 hydroxylation. This is Non-reducing polyketide synthase phnA from Penicillium herquei.